The primary structure comprises 938 residues: Isoleucine--tRNA ligase (938 aa).

The 'HIGH' region signature appears at 58–68 (PYANGSIHIGH). Position 183 is an N6-acetyllysine (Lys183). L-isoleucyl-5'-AMP is bound at residue Glu561. A 'KMSKS' region motif is present at residues 602-606 (KMSKS). ATP is bound at residue Lys605. Positions 901, 904, 921, and 924 each coordinate Zn(2+).

It belongs to the class-I aminoacyl-tRNA synthetase family. IleS type 1 subfamily. Monomer. Requires Zn(2+) as cofactor.

It is found in the cytoplasm. The catalysed reaction is tRNA(Ile) + L-isoleucine + ATP = L-isoleucyl-tRNA(Ile) + AMP + diphosphate. Functionally, catalyzes the attachment of isoleucine to tRNA(Ile). As IleRS can inadvertently accommodate and process structurally similar amino acids such as valine, to avoid such errors it has two additional distinct tRNA(Ile)-dependent editing activities. One activity is designated as 'pretransfer' editing and involves the hydrolysis of activated Val-AMP. The other activity is designated 'posttransfer' editing and involves deacylation of mischarged Val-tRNA(Ile). The protein is Isoleucine--tRNA ligase of Escherichia coli O127:H6 (strain E2348/69 / EPEC).